The following is a 248-amino-acid chain: tRNA (guanine-N(1)-)-methyltransferase (248 aa).

S-adenosyl-L-methionine contacts are provided by residues glycine 113 and 133-138 (IGDFVL).

This sequence belongs to the RNA methyltransferase TrmD family. As to quaternary structure, homodimer.

Its subcellular location is the cytoplasm. It catalyses the reaction guanosine(37) in tRNA + S-adenosyl-L-methionine = N(1)-methylguanosine(37) in tRNA + S-adenosyl-L-homocysteine + H(+). Functionally, specifically methylates guanosine-37 in various tRNAs. This is tRNA (guanine-N(1)-)-methyltransferase from Dehalococcoides mccartyi (strain ATCC BAA-2100 / JCM 16839 / KCTC 5957 / BAV1).